Here is a 366-residue protein sequence, read N- to C-terminus: Glutathione S-transferase omega-like 3 (366 aa).

Cys-46 is an active-site residue. The 153-residue stretch at 197–349 (PRSLEAQITE…LGYTRSQPRV (153 aa)) folds into the GST C-terminal domain.

The protein belongs to the GST superfamily. Omega family.

The protein localises to the cytoplasm. The enzyme catalyses RX + glutathione = an S-substituted glutathione + a halide anion + H(+). Functionally, active as '1-Cys' thiol transferase against beta-hydroxyethyl disulfide (HED), as dehydroascorbate reductase and as dimethylarsinic acid reductase, while not active against the standard GST substrate 1-chloro-2,4-dinitrobenzene (CDNB). This chain is Glutathione S-transferase omega-like 3 (GTO3), found in Saccharomyces cerevisiae (strain ATCC 204508 / S288c) (Baker's yeast).